The sequence spans 689 residues: Protein asunder (689 aa).

Positions 521–550 (NGARLKLSKAKDQYRLLYRELEQLIQLNAT) form a coiled coil. Disordered stretches follow at residues 591–619 (SPER…SKRR) and 669–689 (KDAV…SVRS). Residues 599–614 (SSVGASGSSNSNSLLK) show a composition bias toward low complexity. The Nuclear localization signal (NLS) motif lies at 613–619 (LKASKRR).

The protein belongs to the Integrator subunit 13 family. In terms of assembly, belongs to the multiprotein complex Integrator, at least composed of IntS1, IntS2, IntS3, IntS4, omd/IntS5, IntS6, defl/IntS7, IntS8, IntS9, IntS10, IntS11, IntS12, asun/IntS13, IntS14 and IntS15. The core complex associates with protein phosphatase 2A subunits mts/PP2A and Pp2A-29B, to form the Integrator-PP2A (INTAC) complex. Phosphorylated.

It localises to the nucleus. The protein localises to the cytoplasm. Its subcellular location is the perinuclear region. Its function is as follows. Component of the integrator complex, a multiprotein complex that terminates RNA polymerase II (Pol II) transcription in the promoter-proximal region of genes. The integrator complex provides a quality checkpoint during transcription elongation by driving premature transcription termination of transcripts that are unfavorably configured for transcriptional elongation: the complex terminates transcription by (1) catalyzing dephosphorylation of the C-terminal domain (CTD) of Pol II subunit Polr2A/Rbp1 and Spt5, and (2) degrading the exiting nascent RNA transcript via endonuclease activity. The integrator complex is also involved in the 3'-end processing of the U7 snRNA, and also the spliceosomal snRNAs U1, U2, U4 and U5. The chain is Protein asunder (asun) from Drosophila simulans (Fruit fly).